The following is a 456-amino-acid chain: UDP-N-acetylmuramate--L-alanine ligase (456 aa).

117–123 (GTHGKTT) lines the ATP pocket.

The protein belongs to the MurCDEF family.

It localises to the cytoplasm. The enzyme catalyses UDP-N-acetyl-alpha-D-muramate + L-alanine + ATP = UDP-N-acetyl-alpha-D-muramoyl-L-alanine + ADP + phosphate + H(+). The protein operates within cell wall biogenesis; peptidoglycan biosynthesis. Cell wall formation. The sequence is that of UDP-N-acetylmuramate--L-alanine ligase from Clostridium tetani (strain Massachusetts / E88).